The following is a 183-amino-acid chain: Dual-action ribosomal maturation protein DarP (183 aa).

Belongs to the DarP family.

Its subcellular location is the cytoplasm. In terms of biological role, member of a network of 50S ribosomal subunit biogenesis factors which assembles along the 30S-50S interface, preventing incorrect 23S rRNA structures from forming. Promotes peptidyl transferase center (PTC) maturation. The chain is Dual-action ribosomal maturation protein DarP from Salmonella paratyphi A (strain ATCC 9150 / SARB42).